The chain runs to 332 residues: Adenine deaminase (332 aa).

Zn(2+) is bound by residues histidine 16, histidine 18, and histidine 196. Residue glutamate 199 is the Proton donor of the active site. Aspartate 277 provides a ligand contact to Zn(2+). Aspartate 278 lines the substrate pocket.

The protein belongs to the metallo-dependent hydrolases superfamily. Adenosine and AMP deaminases family. Adenine deaminase type 2 subfamily. Zn(2+) serves as cofactor.

The catalysed reaction is adenine + H2O + H(+) = hypoxanthine + NH4(+). Catalyzes the hydrolytic deamination of adenine to hypoxanthine. Plays an important role in the purine salvage pathway and in nitrogen catabolism. In Acinetobacter baylyi (strain ATCC 33305 / BD413 / ADP1), this protein is Adenine deaminase.